Reading from the N-terminus, the 326-residue chain is GMP reductase (326 aa).

The active-site Thioimidate intermediate is Cys-175. Position 204-227 (204-227 (IIADGGIRTHGDIAKSVRFGATMV)) interacts with NADP(+).

It belongs to the IMPDH/GMPR family. GuaC type 2 subfamily.

It catalyses the reaction IMP + NH4(+) + NADP(+) = GMP + NADPH + 2 H(+). Its function is as follows. Catalyzes the irreversible NADPH-dependent deamination of GMP to IMP. It functions in the conversion of nucleobase, nucleoside and nucleotide derivatives of G to A nucleotides, and in maintaining the intracellular balance of A and G nucleotides. This chain is GMP reductase, found in Bacillus licheniformis (strain ATCC 14580 / DSM 13 / JCM 2505 / CCUG 7422 / NBRC 12200 / NCIMB 9375 / NCTC 10341 / NRRL NRS-1264 / Gibson 46).